Consider the following 300-residue polypeptide: Homoserine kinase (300 aa).

Residue 82 to 92 (RPGSGLGSSAA) participates in ATP binding.

It belongs to the GHMP kinase family. Homoserine kinase subfamily.

The protein resides in the cytoplasm. The enzyme catalyses L-homoserine + ATP = O-phospho-L-homoserine + ADP + H(+). It participates in amino-acid biosynthesis; L-threonine biosynthesis; L-threonine from L-aspartate: step 4/5. Functionally, catalyzes the ATP-dependent phosphorylation of L-homoserine to L-homoserine phosphate. In Methanocella arvoryzae (strain DSM 22066 / NBRC 105507 / MRE50), this protein is Homoserine kinase.